The primary structure comprises 140 residues: Nucleoside diphosphate kinase (140 aa).

ATP-binding residues include lysine 11, phenylalanine 59, arginine 87, threonine 93, arginine 104, and asparagine 114. Histidine 117 acts as the Pros-phosphohistidine intermediate in catalysis.

The protein belongs to the NDK family. Homotetramer. The cofactor is Mg(2+).

Its subcellular location is the cytoplasm. The catalysed reaction is a 2'-deoxyribonucleoside 5'-diphosphate + ATP = a 2'-deoxyribonucleoside 5'-triphosphate + ADP. The enzyme catalyses a ribonucleoside 5'-diphosphate + ATP = a ribonucleoside 5'-triphosphate + ADP. In terms of biological role, major role in the synthesis of nucleoside triphosphates other than ATP. The ATP gamma phosphate is transferred to the NDP beta phosphate via a ping-pong mechanism, using a phosphorylated active-site intermediate. In Rickettsia canadensis (strain McKiel), this protein is Nucleoside diphosphate kinase.